Here is a 327-residue protein sequence, read N- to C-terminus: GMP reductase (327 aa).

Catalysis depends on cysteine 175, which acts as the Thioimidate intermediate. 204–227 (IIADGGIRTHGDVAKSIRFGATMV) serves as a coordination point for NADP(+).

The protein belongs to the IMPDH/GMPR family. GuaC type 2 subfamily.

It carries out the reaction IMP + NH4(+) + NADP(+) = GMP + NADPH + 2 H(+). Functionally, catalyzes the irreversible NADPH-dependent deamination of GMP to IMP. It functions in the conversion of nucleobase, nucleoside and nucleotide derivatives of G to A nucleotides, and in maintaining the intracellular balance of A and G nucleotides. The chain is GMP reductase from Bacillus cereus (strain ATCC 10987 / NRS 248).